Reading from the N-terminus, the 251-residue chain is Capsid protein (251 aa).

Residues 1–35 (MPKRDAPWRHMAGTSKVSRSGNYSPSGGMGSKSNK) are disordered. The Bipartite nuclear localization signal signature appears at 3-20 (KRDAPWRHMAGTSKVSRS). Over residues 15 to 35 (SKVSRSGNYSPSGGMGSKSNK) the composition is skewed to polar residues. A Nuclear localization signal motif is present at residues 35–49 (KANAWVNRPMYRKPR). Residues 54-71 (YKSPDVPKGCEGPCKVQS) fold into a zinc finger. A Nuclear export signal motif is present at residues 96-117 (ITHRVGKRFCVKSVYILGKIWM). Residues 195–242 (RRFWKVNNHVVYNHQEAGKYENHTENALLLYMACTHASNPVYATLKIR) carry the Bipartite nuclear localization signal motif.

Belongs to the geminiviridae capsid protein family. Homomultimer. Binds to single-stranded and double-stranded viral DNA. Interacts (via nuclear localization signals) with host importin alpha-1a.

The protein resides in the virion. It localises to the host nucleus. Encapsidates the viral DNA into characteristic twinned ('geminate') particles. Binds the genomic viral ssDNA and shuttles it into and out of the cell nucleus. The CP of bipartite geminiviruses is not required for cell-to-cell or systemic movement. The sequence is that of Capsid protein from Macroptilium lathyroides (Lima bean).